The chain runs to 459 residues: Smoothelin-like protein 1 (459 aa).

The segment covering 1-27 (MEQTEGNSSEDGTTVSPTAGNLETPGS) has biased composition (polar residues). The interval 1–314 (MEQTEGNSSE…RPRGPRAQNR (314 aa)) is disordered. Basic and acidic residues-rich tracts occupy residues 42 to 55 (SDKEGPSDWAEHLC), 75 to 105 (DELKTDLQGEARGKDEAQGDLAEEKVGKEDT), 112 to 168 (DTGK…KEDA), 185 to 211 (ADVKDQAKPELPEVDGKETGSDTKELV), and 221 to 232 (EQGKENESEERA). The stretch at 124-154 (NEVREKEEAMLASEKQKVDEKETNLESKEKS) forms a coiled coil. A compositionally biased stretch (low complexity) spans 260-283 (PESTGETSPSASESSPSEVPGSPT). Residues 287-300 (PSEKKKDRAPERRV) are compositionally biased toward basic and acidic residues. At serine 301 the chain carries Phosphoserine; by PKA and PKG. The region spanning 343-449 (GGVKNMLLEW…YIQELYRSLV (107 aa)) is the Calponin-homology (CH) domain. A calmodulin-binding region spans residues 441–459 (IQELYRSLVQKGLVKTKKK).

Belongs to the smoothelin family. In terms of assembly, interacts with PPP1R12A. Post-translationally, maximal phosphorylation of Ser-301 correlates with maximal relaxation of aorta in response to acetylcholine. As to expression, widely expressed, with highest expression in skeletal muscles (at protein level). Within striated muscles, significantly more expressed in soleus muscle compared with plantaris muscle or white vastus (at protein level). 30-40% lower expression in females than in males (at protein level). Expressed in type 2a fibers, but not detected in fast twitch type 2b muscle white vastus nor in oxidative type I/b heart muscle (at protein level). Expressed within myometrial cells of the uterus, as well as in the endometrial layer. In the aorta, confined to smooth muscle cells. Not detected in endothelial cells.

It is found in the cytoplasm. It localises to the myofibril. The protein resides in the sarcomere. The protein localises to the i band. Its subcellular location is the m line. It is found in the nucleus. Functionally, plays a role in the regulation of contractile properties of both striated and smooth muscles. When unphosphorylated, may inhibit myosin dephosphorylation. Phosphorylation at Ser-301 reduces this inhibitory activity. The chain is Smoothelin-like protein 1 (Smtnl1) from Mus musculus (Mouse).